The sequence spans 365 residues: Inositol 4-methyltransferase (365 aa).

Asp232 is an S-adenosyl-L-methionine binding site. Catalysis depends on His270, which acts as the Proton acceptor.

It belongs to the class I-like SAM-binding methyltransferase superfamily. Cation-independent O-methyltransferase family. As to expression, leaves and roots. The levels found in the leaves are 25 times greater than in the roots.

The enzyme catalyses myo-inositol + S-adenosyl-L-methionine = 1D-4-O-methyl-myo-inositol + S-adenosyl-L-homocysteine + H(+). It functions in the pathway polyol metabolism; myo-inositol metabolism. Catalyzes the methylation of myo-inositol into ononitol (1D-4-O-methyl myo-inositol), the first step in the biosynthesis of the cyclic sugar pinitol which has osmoprotective properties. The polypeptide is Inositol 4-methyltransferase (IMT1) (Mesembryanthemum crystallinum (Common ice plant)).